The sequence spans 450 residues: Sulfide:quinone oxidoreductase, mitochondrial (450 aa).

FAD-binding positions include 53–54 (AG), glutamate 75, glutamine 83, and valine 118. N6-acetyllysine is present on residues lysine 134 and lysine 173. The active-site Cysteine persulfide intermediate is the cysteine 201. Residues cysteine 201 and cysteine 379 are joined by a disulfide bond. Aspartate 336 is an FAD binding site. Serine 343 is subject to Phosphoserine. 344–347 (KTAA) lines the FAD pocket. Cysteine 379 serves as the catalytic Cysteine persulfide intermediate.

It belongs to the SQRD family. FAD serves as cofactor.

The protein localises to the mitochondrion. The catalysed reaction is ubiquinone-10 + hydrogen sulfide + sulfite + 2 H(+) = ubiquinol-10 + thiosulfate. The enzyme catalyses a quinone + hydrogen sulfide + glutathione + H(+) = S-sulfanylglutathione + a quinol. It catalyses the reaction ubiquinone-10 + hydrogen sulfide + glutathione + H(+) = S-sulfanylglutathione + ubiquinol-10. In terms of biological role, catalyzes the oxidation of hydrogen sulfide with the help of a quinone, such as ubiquinone-10, giving rise to thiosulfate and ultimately to sulfane (molecular sulfur) atoms. Requires an additional electron acceptor; can use sulfite, sulfide or cyanide (in vitro). It is believed the in vivo electron acceptor is glutathione. In Mus musculus (Mouse), this protein is Sulfide:quinone oxidoreductase, mitochondrial.